Consider the following 449-residue polypeptide: Tubulin beta-7 chain (449 aa).

Residues Q11, E69, S138, G142, T143, G144, N204, and N226 each coordinate GTP. Mg(2+) is bound at residue E69. Residues 422-449 (YQQYQDATADEEGEYEEEEAEYEQEETY) form a disordered region. The span at 429 to 449 (TADEEGEYEEEEAEYEQEETY) shows a compositional bias: acidic residues.

The protein belongs to the tubulin family. Dimer of alpha and beta chains. A typical microtubule is a hollow water-filled tube with an outer diameter of 25 nm and an inner diameter of 15 nM. Alpha-beta heterodimers associate head-to-tail to form protofilaments running lengthwise along the microtubule wall with the beta-tubulin subunit facing the microtubule plus end conferring a structural polarity. Microtubules usually have 13 protofilaments but different protofilament numbers can be found in some organisms and specialized cells. Mg(2+) serves as cofactor.

It is found in the cytoplasm. It localises to the cytoskeleton. Tubulin is the major constituent of microtubules, a cylinder consisting of laterally associated linear protofilaments composed of alpha- and beta-tubulin heterodimers. Microtubules grow by the addition of GTP-tubulin dimers to the microtubule end, where a stabilizing cap forms. Below the cap, tubulin dimers are in GDP-bound state, owing to GTPase activity of alpha-tubulin. The chain is Tubulin beta-7 chain (TUBB7) from Arabidopsis thaliana (Mouse-ear cress).